Reading from the N-terminus, the 172-residue chain is MKIALYAGSFDPLTNGHIAILQGSFVLADKVVVAIGIQAKKKSLFSFEERVDLITQVGKDLLSIGPDRLQVISFDTLLIDKAREIGASFLIRGLRDGTDLDYEMQMAGMNGVMAPELQTVFLPASVSGRAITSTLVRQIASMGGDVSAFVPPNVERALHLKFQSSRENGCVS.

Ser-9 is a substrate binding site. ATP is bound by residues 9 to 10 (SF) and His-17. 3 residues coordinate substrate: Lys-41, Leu-78, and Arg-92. ATP-binding positions include 93–95 (GLR), Glu-103, and 128–134 (GRAITST).

The protein belongs to the bacterial CoaD family. In terms of assembly, homohexamer. Mg(2+) is required as a cofactor.

It localises to the cytoplasm. The enzyme catalyses (R)-4'-phosphopantetheine + ATP + H(+) = 3'-dephospho-CoA + diphosphate. It participates in cofactor biosynthesis; coenzyme A biosynthesis; CoA from (R)-pantothenate: step 4/5. Reversibly transfers an adenylyl group from ATP to 4'-phosphopantetheine, yielding dephospho-CoA (dPCoA) and pyrophosphate. In Bartonella quintana (strain Toulouse) (Rochalimaea quintana), this protein is Phosphopantetheine adenylyltransferase.